Here is a 520-residue protein sequence, read N- to C-terminus: Laccase-2 (520 aa).

The N-terminal stretch at 1–19 (MRFSNAFVLVAACISSVLA) is a signal peptide. Plastocyanin-like domains lie at 21-145 (TKTF…FVVY), 157-305 (VDDE…LTLA), and 375-488 (TVPV…FAEA). Positions 82 and 84 each coordinate Cu cation. 2 disulfide bridges follow: Cys103–Cys509 and Cys135–Cys229. N-linked (GlcNAc...) asparagine glycosylation occurs at Asn108. Cu cation-binding residues include His127 and His129. Asn241 and Asn299 each carry an N-linked (GlcNAc...) asparagine glycan. Cu cation contacts are provided by His417, His420, His422, His470, Cys471, His472, and His476. Asn492 carries N-linked (GlcNAc...) asparagine glycosylation.

The protein belongs to the multicopper oxidase family. It depends on Cu cation as a cofactor.

It localises to the secreted. The enzyme catalyses 4 hydroquinone + O2 = 4 benzosemiquinone + 2 H2O. Its function is as follows. Lignin degradation and detoxification of lignin-derived products. The protein is Laccase-2 (lcc2) of Agaricus bisporus (White button mushroom).